The primary structure comprises 104 residues: Pyrimidine/purine nucleoside phosphorylase (104 aa).

This sequence belongs to the nucleoside phosphorylase PpnP family.

The catalysed reaction is a purine D-ribonucleoside + phosphate = a purine nucleobase + alpha-D-ribose 1-phosphate. The enzyme catalyses adenosine + phosphate = alpha-D-ribose 1-phosphate + adenine. It carries out the reaction cytidine + phosphate = cytosine + alpha-D-ribose 1-phosphate. It catalyses the reaction guanosine + phosphate = alpha-D-ribose 1-phosphate + guanine. The catalysed reaction is inosine + phosphate = alpha-D-ribose 1-phosphate + hypoxanthine. The enzyme catalyses thymidine + phosphate = 2-deoxy-alpha-D-ribose 1-phosphate + thymine. It carries out the reaction uridine + phosphate = alpha-D-ribose 1-phosphate + uracil. It catalyses the reaction xanthosine + phosphate = alpha-D-ribose 1-phosphate + xanthine. Functionally, catalyzes the phosphorolysis of diverse nucleosides, yielding D-ribose 1-phosphate and the respective free bases. Can use uridine, adenosine, guanosine, cytidine, thymidine, inosine and xanthosine as substrates. Also catalyzes the reverse reactions. The chain is Pyrimidine/purine nucleoside phosphorylase from Trichlorobacter lovleyi (strain ATCC BAA-1151 / DSM 17278 / SZ) (Geobacter lovleyi).